The following is a 161-amino-acid chain: uncharacterized protein (161 aa).

Residues 1–29 (MTLYDTVKELQEKLRNGEIEINTFLERLG) adopt a coiled-coil conformation.

This is an uncharacterized protein from Acidianus convivator (ATV).